The following is a 92-amino-acid chain: Putative pterin-4-alpha-carbinolamine dehydratase (92 aa).

This sequence belongs to the pterin-4-alpha-carbinolamine dehydratase family.

It carries out the reaction (4aS,6R)-4a-hydroxy-L-erythro-5,6,7,8-tetrahydrobiopterin = (6R)-L-erythro-6,7-dihydrobiopterin + H2O. In Haloarcula marismortui (strain ATCC 43049 / DSM 3752 / JCM 8966 / VKM B-1809) (Halobacterium marismortui), this protein is Putative pterin-4-alpha-carbinolamine dehydratase.